The chain runs to 116 residues: Putative pterin-4-alpha-carbinolamine dehydratase (116 aa).

This sequence belongs to the pterin-4-alpha-carbinolamine dehydratase family.

It catalyses the reaction (4aS,6R)-4a-hydroxy-L-erythro-5,6,7,8-tetrahydrobiopterin = (6R)-L-erythro-6,7-dihydrobiopterin + H2O. This Xylella fastidiosa (strain M12) protein is Putative pterin-4-alpha-carbinolamine dehydratase.